Consider the following 91-residue polypeptide: MARVTVEDCLEHVDNRFELTLVAARRARQLASGAAPEVEPGRDKNTVIALREVAAGKVSRAILDEQMPPPLPNFPGAANREATGAEDAAGE.

A disordered region spans residues 66-91 (QMPPPLPNFPGAANREATGAEDAAGE).

Belongs to the RNA polymerase subunit omega family. The RNAP catalytic core consists of 2 alpha, 1 beta, 1 beta' and 1 omega subunit. When a sigma factor is associated with the core the holoenzyme is formed, which can initiate transcription.

It carries out the reaction RNA(n) + a ribonucleoside 5'-triphosphate = RNA(n+1) + diphosphate. Its function is as follows. Promotes RNA polymerase assembly. Latches the N- and C-terminal regions of the beta' subunit thereby facilitating its interaction with the beta and alpha subunits. This Acidithiobacillus ferrooxidans (strain ATCC 23270 / DSM 14882 / CIP 104768 / NCIMB 8455) (Ferrobacillus ferrooxidans (strain ATCC 23270)) protein is DNA-directed RNA polymerase subunit omega.